The primary structure comprises 151 residues: Protein NrdI (151 aa).

Belongs to the NrdI family.

Functionally, probably involved in ribonucleotide reductase function. This Mesoplasma florum (strain ATCC 33453 / NBRC 100688 / NCTC 11704 / L1) (Acholeplasma florum) protein is Protein NrdI.